The sequence spans 484 residues: Putative amidase AmiA2 (484 aa).

Catalysis depends on charge relay system residues K93 and S167. S191 serves as the catalytic Acyl-ester intermediate.

It belongs to the amidase family.

The catalysed reaction is a monocarboxylic acid amide + H2O = a monocarboxylate + NH4(+). The chain is Putative amidase AmiA2 (amiA2) from Mycobacterium bovis (strain ATCC BAA-935 / AF2122/97).